Reading from the N-terminus, the 258-residue chain is Indole-3-glycerol phosphate synthase (258 aa).

This sequence belongs to the TrpC family.

The enzyme catalyses 1-(2-carboxyphenylamino)-1-deoxy-D-ribulose 5-phosphate + H(+) = (1S,2R)-1-C-(indol-3-yl)glycerol 3-phosphate + CO2 + H2O. It participates in amino-acid biosynthesis; L-tryptophan biosynthesis; L-tryptophan from chorismate: step 4/5. The protein is Indole-3-glycerol phosphate synthase of Campylobacter jejuni subsp. jejuni serotype O:23/36 (strain 81-176).